The sequence spans 608 residues: 1-deoxy-D-xylulose-5-phosphate synthase (608 aa).

Thiamine diphosphate-binding positions include His-66 and 107 to 109 (GHA). Mg(2+) is bound at residue Asp-138. Residues 139–140 (GA), Asn-167, Phe-277, and Glu-350 each bind thiamine diphosphate. Residue Asn-167 participates in Mg(2+) binding.

Belongs to the transketolase family. DXPS subfamily. In terms of assembly, homodimer. Mg(2+) serves as cofactor. The cofactor is thiamine diphosphate.

The catalysed reaction is D-glyceraldehyde 3-phosphate + pyruvate + H(+) = 1-deoxy-D-xylulose 5-phosphate + CO2. The protein operates within metabolic intermediate biosynthesis; 1-deoxy-D-xylulose 5-phosphate biosynthesis; 1-deoxy-D-xylulose 5-phosphate from D-glyceraldehyde 3-phosphate and pyruvate: step 1/1. Its function is as follows. Catalyzes the acyloin condensation reaction between C atoms 2 and 3 of pyruvate and glyceraldehyde 3-phosphate to yield 1-deoxy-D-xylulose-5-phosphate (DXP). This is 1-deoxy-D-xylulose-5-phosphate synthase from Thermotoga petrophila (strain ATCC BAA-488 / DSM 13995 / JCM 10881 / RKU-1).